The primary structure comprises 212 residues: Ribonuclease HII (212 aa).

Residues 1 to 199 form the RNase H type-2 domain; it reads MIGGIDEAGR…VGGRIGLGRN (199 aa). A divalent metal cation is bound by residues Asp6, Glu7, and Asp101.

It belongs to the RNase HII family. Mn(2+) serves as cofactor. It depends on Mg(2+) as a cofactor.

It is found in the cytoplasm. The catalysed reaction is Endonucleolytic cleavage to 5'-phosphomonoester.. Endonuclease that specifically degrades the RNA of RNA-DNA hybrids. The polypeptide is Ribonuclease HII (Pyrobaculum aerophilum (strain ATCC 51768 / DSM 7523 / JCM 9630 / CIP 104966 / NBRC 100827 / IM2)).